Consider the following 574-residue polypeptide: MQGSSTSILHFVPSDPTSTSVLDFLSPTPRGTSPVHDRRLHAGDLALRAGGDRLLVADTVAAVVESLVQAWRQVRMELLVPLLRGAVVACMVMSVIVLAEKVFLGVVSAVVKLLRRRPARLYRCDPVVVEDDDEAGRASFPMVLVQIPMYNEKEVYQLSIGAACRLTWPADRLIVQVLDDSTDAIVKELVRKECERWGKKGINVKYETRKDRAGYKAGNLREGMRRGYVQGCEFVAMLDADFQPPPDFLLKTVPFLVHNPRLALVQTRWEFVNANDCLLTRMQEMSMDYHFKVEQEAGSSLCNFFGYNGTAGVWRRQVIDESGGWEDRTTAEDMDLALRAGLLGWEFVYVGSIKVKSELPSTLKAYRSQQHRWSCGPALLFKKMFWEILAAKKVSFWKKLYMTYDFFIARRIISTFFTFFFFSVLLPMKVFFPEVQIPLWELILIPTAIILLHSVGTPRSIHLIILWFLFENVMALHRLKATLIGFFEAGRANEWIVTQKLGNIQKLKSIVRVTKNCRFKDRFHCLELFIGGFLLTSACYDYLYRDDIFYIFLLSQSIIYFAIGFEFMGVSVSS.

Residues 87 to 107 (VVACMVMSVIVLAEKVFLGVV) form a helical membrane-spanning segment. D180 is a catalytic residue. Residues D239 and D241 each coordinate substrate. The active site involves D333. A run of 4 helical transmembrane segments spans residues 412–432 (IISTFFTFFFFSVLLPMKVFF), 437–457 (IPLWELILIPTAIILLHSVGT), 523–543 (FHCLELFIGGFLLTSACYDYL), and 548–568 (IFYIFLLSQSIIYFAIGFEFM).

Belongs to the glycosyltransferase 2 family. Plant cellulose synthase-like A subfamily.

Its subcellular location is the golgi apparatus membrane. The catalysed reaction is GDP-mannose + (glucomannan)n = GDP + (glucomannan)n+1.. Its function is as follows. Probable mannan synthase which consists of a 4-beta-mannosyltransferase activity on mannan using GDP-mannose. The beta-1,4-mannan product is the backbone for galactomannan synthesis by galactomannan galactosyltransferase. Galactomannan is a noncellulosic polysaccharides of plant cell wall. This is Probable glucomannan 4-beta-mannosyltransferase 6 from Oryza sativa subsp. japonica (Rice).